A 425-amino-acid polypeptide reads, in one-letter code: Serine--tRNA ligase (425 aa).

231–233 provides a ligand contact to L-serine; the sequence is TAE. Residue 262 to 264 participates in ATP binding; the sequence is RSE. Glu285 lines the L-serine pocket. ATP is bound at residue 349 to 352; sequence EISS. Position 385 (Ser385) interacts with L-serine.

It belongs to the class-II aminoacyl-tRNA synthetase family. Type-1 seryl-tRNA synthetase subfamily. In terms of assembly, homodimer. The tRNA molecule binds across the dimer.

The protein localises to the cytoplasm. The enzyme catalyses tRNA(Ser) + L-serine + ATP = L-seryl-tRNA(Ser) + AMP + diphosphate + H(+). The catalysed reaction is tRNA(Sec) + L-serine + ATP = L-seryl-tRNA(Sec) + AMP + diphosphate + H(+). It participates in aminoacyl-tRNA biosynthesis; selenocysteinyl-tRNA(Sec) biosynthesis; L-seryl-tRNA(Sec) from L-serine and tRNA(Sec): step 1/1. Catalyzes the attachment of serine to tRNA(Ser). Is also able to aminoacylate tRNA(Sec) with serine, to form the misacylated tRNA L-seryl-tRNA(Sec), which will be further converted into selenocysteinyl-tRNA(Sec). In Maricaulis maris (strain MCS10) (Caulobacter maris), this protein is Serine--tRNA ligase.